The following is a 361-amino-acid chain: Zinc transporter ZIP13 (361 aa).

Residues 1-6 (MPGCPC) lie on the Lumenal side of the membrane. Residues 7–27 (PGCGMAGQRLLFLTVLALELL) traverse the membrane as a helical segment. At 28 to 68 (ERAGGSQPALRSLGAAAACRLDSKESESWGALLSGERLDTW) the chain is on the cytoplasmic side. A helical membrane pass occupies residues 69-89 (ICSLLGSLMVGLSGVFPLLVI). The Lumenal portion of the chain corresponds to 90–108 (PLEMGTMLQSEAGAWRLKQ). A helical membrane pass occupies residues 109 to 129 (LLSFALGGLLGNVFLHLLPEA). At 130–150 (WAYTCNISPGVEGQSLQRQQQ) the chain is on the cytoplasmic side. The chain crosses the membrane as a helical span at residues 151–171 (LGLWVIAGFLTFLALEKMFLN). Residues 172 to 233 (CKEEDPSQAP…TIDNFTHGLA (62 aa)) are Lumenal-facing. The helical transmembrane segment at 234–254 (VAASFLVSKKIGLLTTMAILL) threads the bilayer. An XEXPHE-motif motif is present at residues 255–260 (HEIPHE). The Cytoplasmic segment spans residues 255–276 (HEIPHEVGDFAILLRAGFDRWT). Residues 277 to 297 (AAKLQFSTALGGLLGACFAIC) traverse the membrane as a helical segment. Over 298 to 307 (TQSPKGVEET) the chain is Lumenal. A helical transmembrane segment spans residues 308-328 (VVWTLPFTSGGFLYVALVNVL). The Cytoplasmic portion of the chain corresponds to 329–340 (PDLLEEDDPWHL). The chain crosses the membrane as a helical span at residues 341-361 (NPPLPTGTPCSRCCCSAPVSW).

Belongs to the ZIP transporter (TC 2.A.5) family. Homodimer.

The protein localises to the golgi apparatus membrane. Its subcellular location is the cytoplasmic vesicle membrane. It localises to the endoplasmic reticulum membrane. It catalyses the reaction Zn(2+)(in) = Zn(2+)(out). Functionally, functions as a zinc transporter transporting Zn(2+) from the Golgi apparatus to the cytosol and thus influences the zinc level at least in areas of the cytosol. May regulate beige adipocyte differentiation. The polypeptide is Zinc transporter ZIP13 (Rattus norvegicus (Rat)).